The following is a 228-amino-acid chain: L-ribulose-5-phosphate 4-epimerase UlaF (228 aa).

Substrate is bound by residues 26 to 27 (GN), 43 to 44 (SG), and 72 to 73 (SS). Residues Asp-74, His-93, and His-95 each coordinate Zn(2+). Catalysis depends on Asp-118, which acts as the Proton donor/acceptor. Zn(2+) is bound at residue His-167. Tyr-225 (proton donor/acceptor) is an active-site residue.

The protein belongs to the aldolase class II family. AraD/FucA subfamily. Requires Zn(2+) as cofactor.

The enzyme catalyses L-ribulose 5-phosphate = D-xylulose 5-phosphate. Its pathway is cofactor degradation; L-ascorbate degradation; D-xylulose 5-phosphate from L-ascorbate: step 4/4. In terms of biological role, catalyzes the isomerization of L-ribulose 5-phosphate to D-xylulose 5-phosphate. Is involved in the anaerobic L-ascorbate utilization. This chain is L-ribulose-5-phosphate 4-epimerase UlaF, found in Escherichia coli (strain 55989 / EAEC).